The sequence spans 756 residues: 5-methyltetrahydropteroyltriglutamate--homocysteine methyltransferase (756 aa).

5-methyltetrahydropteroyltri-L-glutamate is bound by residues arginine 16–lysine 19 and lysine 116. L-homocysteine is bound by residues isoleucine 433 to serine 435 and glutamate 486. Residues isoleucine 433 to serine 435 and glutamate 486 contribute to the L-methionine site. Residues arginine 517–cysteine 518 and tryptophan 563 contribute to the 5-methyltetrahydropteroyltri-L-glutamate site. Residue aspartate 601 coordinates L-homocysteine. Position 601 (aspartate 601) interacts with L-methionine. Glutamate 607 serves as a coordination point for 5-methyltetrahydropteroyltri-L-glutamate. Positions 643, 645, and 667 each coordinate Zn(2+). Histidine 696 acts as the Proton donor in catalysis. Position 728 (cysteine 728) interacts with Zn(2+).

The protein belongs to the vitamin-B12 independent methionine synthase family. It depends on Zn(2+) as a cofactor.

The catalysed reaction is 5-methyltetrahydropteroyltri-L-glutamate + L-homocysteine = tetrahydropteroyltri-L-glutamate + L-methionine. The protein operates within amino-acid biosynthesis; L-methionine biosynthesis via de novo pathway; L-methionine from L-homocysteine (MetE route): step 1/1. Functionally, catalyzes the transfer of a methyl group from 5-methyltetrahydrofolate to homocysteine resulting in methionine formation. The protein is 5-methyltetrahydropteroyltriglutamate--homocysteine methyltransferase of Buchnera aphidicola subsp. Baizongia pistaciae (strain Bp).